The following is a 188-amino-acid chain: F-box only protein 36 (188 aa).

The region spanning 91–137 is the F-box domain; it reads FDFLERLSDDLLLTIISYLDLEDIARLCQTSHRFAKLCMSDKLWEQI.

In terms of assembly, directly interacts with SKP1 and CUL1.

Substrate-recognition component of the SCF (SKP1-CUL1-F-box protein)-type E3 ubiquitin ligase complex. The polypeptide is F-box only protein 36 (FBXO36) (Homo sapiens (Human)).